The sequence spans 94 residues: Large ribosomal subunit protein bL25 (94 aa).

The protein belongs to the bacterial ribosomal protein bL25 family. In terms of assembly, part of the 50S ribosomal subunit; part of the 5S rRNA/L5/L18/L25 subcomplex. Contacts the 5S rRNA. Binds to the 5S rRNA independently of L5 and L18.

In terms of biological role, this is one of the proteins that binds to the 5S RNA in the ribosome where it forms part of the central protuberance. This is Large ribosomal subunit protein bL25 from Shigella boydii serotype 4 (strain Sb227).